The primary structure comprises 345 residues: Nicotinate-nucleotide--dimethylbenzimidazole phosphoribosyltransferase (345 aa).

Glu-311 functions as the Proton acceptor in the catalytic mechanism.

It belongs to the CobT family.

The enzyme catalyses 5,6-dimethylbenzimidazole + nicotinate beta-D-ribonucleotide = alpha-ribazole 5'-phosphate + nicotinate + H(+). The protein operates within nucleoside biosynthesis; alpha-ribazole biosynthesis; alpha-ribazole from 5,6-dimethylbenzimidazole: step 1/2. Functionally, catalyzes the synthesis of alpha-ribazole-5'-phosphate from nicotinate mononucleotide (NAMN) and 5,6-dimethylbenzimidazole (DMB). This chain is Nicotinate-nucleotide--dimethylbenzimidazole phosphoribosyltransferase, found in Janthinobacterium sp. (strain Marseille) (Minibacterium massiliensis).